A 496-amino-acid chain; its full sequence is E3 ubiquitin-protein ligase CBL-C (496 aa).

Positions Pro-7–Cys-144 are 4H. A Cbl-PTB domain is found at Pro-7–Glu-320. Residues Gly-145–Phe-217 form an EF-hand-like region. Ca(2+)-binding residues include Asp-198, Thr-200, Asn-202, and Glu-209. Residues Gln-218–Glu-320 form an SH2-like region. Arg-263 serves as a coordination point for 4-O-phospho-L-tyrosine. A linker region spans residues Leu-321–Leu-349. The residue at position 340 (Tyr-340) is a Phosphotyrosine; by SRC. The RING-type zinc-finger motif lies at Cys-350–Arg-389. The interval Cys-350–Glu-494 is interaction with RET. The segment at Pro-432–Lys-453 is disordered.

As to quaternary structure, interacts with Ubiquitin-conjugating enzyme E2 UBE2D2 and UBE2D3. Isoform 1 interacts with EGFR (tyrosine phosphorylated). Interacts with the SH3 domain proteins LYN and CRK. Interacts (via RING-type zinc finger) with TGFB1I1 (via LIM zinc-binding domain 2); the interaction is direct and enhances the E3 activity. Interacts directly with RET (inactive) and CD2AP; dissociates from RET upon RET activation by GDNF which also increases the interaction with CD2AP suggesting dissociation as CBLC:CD2AP complex. Interacts with SRC; the interaction is enhanced when SRC is phosphorylated at 'Tyr-419'. Phosphorylated on tyrosines by EGFR. In terms of processing, phosphorylated on multiple tyrosine residues by SRC. Isoform 1, but not isoform 2, is phosphorylated on tyrosines by EGFR. Post-translationally, autoubiquitinated, when phosphorylated at Tyr-340. As to expression, widely expressed in tissues, where the expression is restricted to epithelial cells (at protein level).

The catalysed reaction is S-ubiquitinyl-[E2 ubiquitin-conjugating enzyme]-L-cysteine + [acceptor protein]-L-lysine = [E2 ubiquitin-conjugating enzyme]-L-cysteine + N(6)-ubiquitinyl-[acceptor protein]-L-lysine.. With respect to regulation, phosphorylation at Tyr-340 is necessary and sufficient for the activation of E3 activity. Its function is as follows. Acts as an E3 ubiquitin-protein ligase, which accepts ubiquitin from specific E2 ubiquitin-conjugating enzymes, and then transfers it to substrates promoting their degradation by the proteasome. Functionally coupled with the E2 ubiquitin-protein ligases UB2D1, UB2D2 and UB2D3. Regulator of EGFR mediated signal transduction; upon EGF activation, ubiquitinates EGFR. Isoform 1, but not isoform 2, inhibits EGF stimulated MAPK1 activation. Promotes ubiquitination of SRC phosphorylated at 'Tyr-424', has the highest ubiquitin ligase activity among CBL family proteins. In collaboration with CD2AP may act as regulatory checkpoint for Ret signaling by modulating the rate of RET degradation after ligand activation; CD2AP converts it from an inhibitor to a promoter of RET degradation; the function limits the potency of GDNF on neuronal survival. This Mus musculus (Mouse) protein is E3 ubiquitin-protein ligase CBL-C (Cblc).